The following is a 107-amino-acid chain: Universal stress protein B homolog (107 aa).

A run of 2 helical transmembrane segments spans residues 6-25 (TILFALMLVTAINVARYVTA) and 89-106 (LFILSGSLLVLTTVVAFM).

Belongs to the universal stress protein B family.

It is found in the cell inner membrane. This Vibrio cholerae serotype O1 (strain ATCC 39541 / Classical Ogawa 395 / O395) protein is Universal stress protein B homolog.